The sequence spans 131 residues: Small ribosomal subunit protein bS16 (131 aa).

The tract at residues 87–131 (PGAEGTYRVPTANTKPPRIPGGGAAKAVEAPAEAPAEAETPASES) is disordered. Residues 111–131 (AKAVEAPAEAPAEAETPASES) show a composition bias toward low complexity.

Belongs to the bacterial ribosomal protein bS16 family.

The sequence is that of Small ribosomal subunit protein bS16 from Kineococcus radiotolerans (strain ATCC BAA-149 / DSM 14245 / SRS30216).